A 118-amino-acid chain; its full sequence is Aspartate 1-decarboxylase (118 aa).

Residue S25 is the Schiff-base intermediate with substrate; via pyruvic acid of the active site. S25 carries the post-translational modification Pyruvic acid (Ser). T57 contributes to the substrate binding site. Y58 functions as the Proton donor in the catalytic mechanism. Substrate is bound at residue 73–75 (GAA).

It belongs to the PanD family. In terms of assembly, heterooctamer of four alpha and four beta subunits. It depends on pyruvate as a cofactor. Is synthesized initially as an inactive proenzyme, which is activated by self-cleavage at a specific serine bond to produce a beta-subunit with a hydroxyl group at its C-terminus and an alpha-subunit with a pyruvoyl group at its N-terminus.

It is found in the cytoplasm. It carries out the reaction L-aspartate + H(+) = beta-alanine + CO2. It participates in cofactor biosynthesis; (R)-pantothenate biosynthesis; beta-alanine from L-aspartate: step 1/1. In terms of biological role, catalyzes the pyruvoyl-dependent decarboxylation of aspartate to produce beta-alanine. The sequence is that of Aspartate 1-decarboxylase from Hyphomonas neptunium (strain ATCC 15444).